Reading from the N-terminus, the 433-residue chain is Homogentisate 1,2-dioxygenase (433 aa).

The active-site Proton acceptor is His-288. Fe cation is bound by residues His-331 and Glu-337. 2 residues coordinate homogentisate: Tyr-346 and His-367. Residue His-367 participates in Fe cation binding.

This sequence belongs to the homogentisate dioxygenase family. In terms of assembly, hexamer; dimer of trimers. Fe cation serves as cofactor.

The enzyme catalyses homogentisate + O2 = 4-maleylacetoacetate + H(+). The protein operates within amino-acid degradation; L-phenylalanine degradation; acetoacetate and fumarate from L-phenylalanine: step 4/6. Its function is as follows. Involved in the catabolism of homogentisate (2,5-dihydroxyphenylacetate or 2,5-OH-PhAc), a central intermediate in the degradation of phenylalanine and tyrosine. Catalyzes the oxidative ring cleavage of the ar omatic ring of 2,5-dihydroxyphenylacetate to yield maleylacetoacetate. The sequence is that of Homogentisate 1,2-dioxygenase from Pseudomonas putida (strain ATCC 47054 / DSM 6125 / CFBP 8728 / NCIMB 11950 / KT2440).